The sequence spans 391 residues: 3-ketoacyl-CoA thiolase (391 aa).

Cys95 (acyl-thioester intermediate) is an active-site residue. Residues His347 and Cys377 each act as proton acceptor in the active site.

It belongs to the thiolase-like superfamily. Thiolase family. In terms of assembly, heterotetramer of two alpha chains (FadB) and two beta chains (FadA).

The protein localises to the cytoplasm. It carries out the reaction an acyl-CoA + acetyl-CoA = a 3-oxoacyl-CoA + CoA. It participates in lipid metabolism; fatty acid beta-oxidation. Catalyzes the final step of fatty acid oxidation in which acetyl-CoA is released and the CoA ester of a fatty acid two carbons shorter is formed. The chain is 3-ketoacyl-CoA thiolase from Pseudomonas fluorescens (strain ATCC BAA-477 / NRRL B-23932 / Pf-5).